Here is a 1398-residue protein sequence, read N- to C-terminus: DNA-directed RNA polymerase subunit beta' (1398 aa).

Zn(2+)-binding residues include C73, C75, C88, and C91. Residues D464, D466, and D468 each coordinate Mg(2+). C823, C897, C904, and C907 together coordinate Zn(2+).

This sequence belongs to the RNA polymerase beta' chain family. The RNAP catalytic core consists of 2 alpha, 1 beta, 1 beta' and 1 omega subunit. When a sigma factor is associated with the core the holoenzyme is formed, which can initiate transcription. It depends on Mg(2+) as a cofactor. The cofactor is Zn(2+).

The enzyme catalyses RNA(n) + a ribonucleoside 5'-triphosphate = RNA(n+1) + diphosphate. DNA-dependent RNA polymerase catalyzes the transcription of DNA into RNA using the four ribonucleoside triphosphates as substrates. The sequence is that of DNA-directed RNA polymerase subunit beta' from Gluconacetobacter diazotrophicus (strain ATCC 49037 / DSM 5601 / CCUG 37298 / CIP 103539 / LMG 7603 / PAl5).